The sequence spans 111 residues: uncharacterized protein (111 aa).

The next 4 helical transmembrane spans lie at 3–23 (WVLV…LKHA), 24–44 (DSLL…ILLI), 54–74 (AAYT…GIVL), and 80–100 (AAQM…KLFT).

Belongs to the drug/metabolite transporter (DMT) superfamily. Small multidrug resistance (SMR) (TC 2.A.7.1) family.

Its subcellular location is the cell membrane. This is an uncharacterized protein from Bacillus subtilis (strain 168).